A 448-amino-acid polypeptide reads, in one-letter code: Bifunctional F420 biosynthesis protein FbiB (448 aa).

The coenzyme F420:L-glutamate ligase stretch occupies residues 1 to 244; it reads MTGPEHGSAS…PGANDLFWLG (244 aa). GTP-binding positions include 20–23, Ser-50, and Lys-55; that span reads LPEF. Residue Asp-109 coordinates a divalent metal cation. A GTP-binding site is contributed by Asn-112. Positions 150 and 151 each coordinate a divalent metal cation. A dehydro-coenzyme F420-0 reductase region spans residues 245–448; that stretch reads TAEALELGRQ…VPAADLLILK (204 aa). Residues 260 to 264 and Ala-288 each bind FMN; that span reads RRSVR. Asp-320 provides a ligand contact to coenzyme F420-(gamma-Glu)n. The FMN site is built by Gly-399 and Arg-436.

It in the N-terminal section; belongs to the CofE family. Mg(2+) serves as cofactor. It depends on Mn(2+) as a cofactor. The cofactor is K(+).

The enzyme catalyses oxidized coenzyme F420-0 + GTP + L-glutamate = oxidized coenzyme F420-1 + GDP + phosphate + H(+). It carries out the reaction oxidized coenzyme F420-1 + GTP + L-glutamate = oxidized coenzyme F420-2 + GDP + phosphate + H(+). The catalysed reaction is oxidized coenzyme F420-(gamma-L-Glu)(n) + GTP + L-glutamate = oxidized coenzyme F420-(gamma-L-Glu)(n+1) + GDP + phosphate + H(+). It catalyses the reaction oxidized coenzyme F420-0 + FMN + H(+) = dehydro coenzyme F420-0 + FMNH2. It functions in the pathway cofactor biosynthesis; coenzyme F420 biosynthesis. Bifunctional enzyme that catalyzes the GTP-dependent successive addition of multiple gamma-linked L-glutamates to the L-lactyl phosphodiester of 7,8-didemethyl-8-hydroxy-5-deazariboflavin (F420-0) to form polyglutamated F420 derivatives, and the FMNH2-dependent reduction of dehydro-F420-0 to form F420-0. The polypeptide is Bifunctional F420 biosynthesis protein FbiB (Mycobacterium tuberculosis (strain ATCC 25177 / H37Ra)).